A 474-amino-acid polypeptide reads, in one-letter code: Hepatocyte nuclear factor 4-alpha (474 aa).

Residues 57 to 132 (SALCAICGDR…AGMKKEAVQN (76 aa)) constitute a DNA-binding region (nuclear receptor). 2 NR C4-type zinc fingers span residues 60–80 (CAIC…CDGC) and 96–120 (CRFS…LKKC). Residues S142 and S143 each carry the phosphoserine modification. Residue Y144 is modified to Phosphotyrosine. The region spanning 147 to 377 (SSLPSINALL…NLLQEMLLGG (231 aa)) is the NR LBD domain. Phosphothreonine is present on T166. S167 bears the Phosphoserine mark. Residues K234 and K307 each participate in a glycyl lysine isopeptide (Lys-Gly) (interchain with G-Cter in ubiquitin) cross-link. Position 313 is a phosphoserine; by AMPK (S313). The 9aaTAD motif lies at 368 to 376 (NLLQEMLLG). The disordered stretch occupies residues 419 to 447 (EWPRPRGQAATPETPQPSPPGGSGSEPYK). Phosphothreonine occurs at positions 429 and 432. At S436 the chain carries Phosphoserine. K458 carries the post-translational modification N6-acetyllysine.

The protein belongs to the nuclear hormone receptor family. NR2 subfamily. As to quaternary structure, homodimerization is required for HNF4-alpha to bind to its recognition site. Interacts with CLOCK, BMAL1, CRY1, CRY2, PER1 and PER2. Interacts with NR0B2/SHP; the resulting heterodimer is transcriptionally inactive. Interacts with DDX3X; this interaction disrupts the interaction between HNF4 and NR0B2 that forms inactive heterodimers and enhances the formation of active HNF4 homodimers. Phosphorylated on tyrosine residue(s); phosphorylation is important for its DNA-binding activity. Phosphorylation may directly or indirectly play a regulatory role in the subnuclear distribution. Phosphorylation at Ser-313 by AMPK reduces the ability to form homodimers and bind DNA. Post-translationally, acetylation at Lys-458 lowers transcriptional activation by about two-fold.

Its subcellular location is the nucleus. In terms of biological role, transcriptional regulator which controls the expression of hepatic genes during the transition of endodermal cells to hepatic progenitor cells, facilitating the recruitment of RNA pol II to the promoters of target genes. Activates the transcription of CYP2C38. Represses the CLOCK-BMAL1 transcriptional activity and is essential for circadian rhythm maintenance and period regulation in the liver and colon cells. The sequence is that of Hepatocyte nuclear factor 4-alpha (HNF4A) from Homo sapiens (Human).